The chain runs to 243 residues: Venom nerve growth factor (243 aa).

A signal peptide spans 1 to 18; it reads MSMLCYTLIIVFLIGIWA. Residues 19–125 constitute a propeptide that is removed on maturation; it reads APKSEDNVPL…TLNRNIRAKR (107 aa). The span at 47-66 shows a compositional bias: basic and acidic residues; sequence GLKTSRNTDQRHPAPKKAED. Residues 47-69 are disordered; the sequence is GLKTSRNTDQRHPAPKKAEDQEL. Cystine bridges form between Cys139–Cys204, Cys182–Cys232, and Cys192–Cys234. The N-linked (GlcNAc...) asparagine glycan is linked to Asn148.

It belongs to the NGF-beta family. In terms of assembly, homodimer; non-covalently linked. Expressed by the venom gland.

The protein resides in the secreted. Functionally, nerve growth factor is important for the development and maintenance of the sympathetic and sensory nervous systems. It stimulates division and differentiation of sympathetic and embryonic sensory neurons as well as basal forebrain cholinergic neurons in the brain. Its relevance in the snake venom is not clear. However, it has been shown to inhibit metalloproteinase-dependent proteolysis of platelet glycoprotein Ib alpha, suggesting a metalloproteinase inhibition to prevent metalloprotease autodigestion and/or protection against prey proteases. Binds a lipid between the two protein chains in the homodimer. The lipid-bound form promotes histamine relase from mouse mast cells, contrary to the lipid-free form. This Oxyuranus scutellatus scutellatus (Australian taipan) protein is Venom nerve growth factor.